Here is a 353-residue protein sequence, read N- to C-terminus: Polyprenal reductase 2 (353 aa).

6 helical membrane passes run P11–I31, F78–F98, M175–A195, P234–L254, Y291–E308, and W313–L335.

The protein belongs to the steroid 5-alpha reductase family. Polyprenal reductase subfamily.

Its subcellular location is the cell membrane. The enzyme catalyses a di-trans,poly-cis-dolichal + NADP(+) = a di-trans,poly-cis-polyprenal + NADPH + H(+). It participates in protein modification; protein glycosylation. Functionally, plays a key role in early steps of protein N-linked glycosylation by being involved in the conversion of polyprenol into dolichol. Acts as a polyprenal reductase that mediates the reduction of polyprenal into dolichal in a NADP-dependent mechanism. Dolichols are required for the synthesis of dolichol-linked monosaccharides and the oligosaccharide precursor used for N-glycosylation. In Oryza sativa subsp. japonica (Rice), this protein is Polyprenal reductase 2.